The primary structure comprises 916 residues: Pertactin autotransporter (916 aa).

Positions 1–37 (MNMSLSRIVKAAPLRRTTLAMALGALGALGAAPAAHA) are cleaved as a signal peptide. The Cell attachment site; involved in adhesion to various eukaryotic cell lines motif lies at 263–265 (RGD). Repeat copies occupy residues 269-273 (GGAVP), 274-278 (GGAVP), and 279-283 (GGAVP). A 4 X 5 AA tandem repeats of G-G-A-V-P region spans residues 269–288 (GGAVPGGAVPGGAVPGGFGP). The stretch at 284-288 (GGFGP) is one 4; approximate repeat. Residues 564–613 (SLVGAKAPPAPKPAPQPGPQPGPQPPQPPQPPQRQPEAPAPQPPAGRELS) are disordered. Over residues 571 to 607 (PPAPKPAPQPGPQPGPQPPQPPQPPQRQPEAPAPQPP) the composition is skewed to pro residues. Residues 578 to 606 (PQPGPQPGPQPPQPPQPPQRQPEAPAPQP) are 6 X 3 AA repeats of P-Q-P. Positions 648–916 (LNPDAGGAWG…TFHAGYRYSW (269 aa)) constitute an Autotransporter domain. The short motif at 706-708 (RGD) is the Cell attachment site element.

In terms of assembly, monomer.

It localises to the periplasm. The protein resides in the secreted. It is found in the cell surface. Its subcellular location is the cell outer membrane. In terms of biological role, agglutinogen that binds to eukaryotic cells; a process mediated by the R-G-D sequence. Pertactin may have a role in bacterial adhesion, and thus play a role in virulence. May contribute to the disease state of whooping cough. The chain is Pertactin autotransporter (prn) from Bordetella bronchiseptica (strain ATCC BAA-588 / NCTC 13252 / RB50) (Alcaligenes bronchisepticus).